Reading from the N-terminus, the 346-residue chain is Mitogen-activated protein kinase kinase 1c (346 aa).

A Protein kinase domain is found at 70–332 (LELVRFLGKG…TTDLLKHPFL (263 aa)). ATP contacts are provided by residues 76–84 (LGKGAGGTV) and lysine 99. The active-site Proton acceptor is aspartate 194.

Belongs to the protein kinase superfamily. STE Ser/Thr protein kinase family. MAP kinase kinase subfamily.

The enzyme catalyses L-seryl-[protein] + ATP = O-phospho-L-seryl-[protein] + ADP + H(+). It catalyses the reaction L-threonyl-[protein] + ATP = O-phospho-L-threonyl-[protein] + ADP + H(+). It carries out the reaction L-tyrosyl-[protein] + ATP = O-phospho-L-tyrosyl-[protein] + ADP + H(+). The CERK1, MEKK1a/b, MKK1a/b/c and MPK4a/b proteins are involved in pathogen defense. The pathway induces rapid growth inhibition, cell wall depositions and accumulation of defense-related transcripts. This protein is required for full defense response to fungal pathogen chitin. This is Mitogen-activated protein kinase kinase 1c from Physcomitrium patens (Spreading-leaved earth moss).